Reading from the N-terminus, the 367-residue chain is Putative F-box protein At3g21120 (367 aa).

The 43-residue stretch at 1–43 folds into the F-box domain; sequence MHLPEDLVLEILSKVPAVSLARFRSTCRRWNALVVDGSFAKKH.

The sequence is that of Putative F-box protein At3g21120 from Arabidopsis thaliana (Mouse-ear cress).